Here is a 182-residue protein sequence, read N- to C-terminus: Adenine phosphoribosyltransferase (182 aa).

Belongs to the purine/pyrimidine phosphoribosyltransferase family. As to quaternary structure, homodimer.

Its subcellular location is the cytoplasm. The catalysed reaction is AMP + diphosphate = 5-phospho-alpha-D-ribose 1-diphosphate + adenine. The protein operates within purine metabolism; AMP biosynthesis via salvage pathway; AMP from adenine: step 1/1. In terms of biological role, catalyzes a salvage reaction resulting in the formation of AMP, that is energically less costly than de novo synthesis. The protein is Adenine phosphoribosyltransferase of Sulfurimonas denitrificans (strain ATCC 33889 / DSM 1251) (Thiomicrospira denitrificans (strain ATCC 33889 / DSM 1251)).